Here is a 453-residue protein sequence, read N- to C-terminus: Carbamoyl phosphate synthase arginine-specific small chain (453 aa).

A mitochondrion-targeting transit peptide spans 1–33 (MFSRLAARLPKASALNGVAARQVRNLSQPAITG). Positions 26–50 (LSQPAITGSKGRNMPAREPRTTAAA) are disordered. The L-glutamine site is built by Ser-97, Gly-280, and Gly-282. Positions 233 to 420 (HVALIDCGVK…MENVELFKSN (188 aa)) constitute a Glutamine amidotransferase type-1 domain. Catalysis depends on Cys-309, which acts as the Nucleophile. L-glutamine-binding residues include Leu-310, Gln-313, Asn-351, Gly-353, and Tyr-354. Active-site residues include His-393 and Glu-395.

It belongs to the CarA family. In terms of assembly, heterodimer composed of 2 chains; the small (or glutamine) chain promotes the hydrolysis of glutamine to ammonia, which is used by the large (or ammonia) chain to synthesize carbamoyl phosphate.

The protein localises to the mitochondrion matrix. The enzyme catalyses hydrogencarbonate + L-glutamine + 2 ATP + H2O = carbamoyl phosphate + L-glutamate + 2 ADP + phosphate + 2 H(+). It carries out the reaction L-glutamine + H2O = L-glutamate + NH4(+). It functions in the pathway amino-acid biosynthesis; L-arginine biosynthesis; carbamoyl phosphate from bicarbonate: step 1/1. In terms of biological role, small subunit of the arginine-specific carbamoyl phosphate synthase (CPSase). CPSase catalyzes the formation of carbamoyl phosphate from the ammonia moiety of glutamine, carbonate, and phosphate donated by ATP, the first step of the arginine biosynthetic pathway. The small subunit (glutamine amidotransferase) binds and cleaves glutamine to supply the large subunit with the substrate ammonia. The chain is Carbamoyl phosphate synthase arginine-specific small chain (arg-2) from Neurospora crassa (strain ATCC 24698 / 74-OR23-1A / CBS 708.71 / DSM 1257 / FGSC 987).